The primary structure comprises 189 residues: Cell division protein SepF (189 aa).

A compositionally biased stretch (polar residues) spans 152–163 (FQEEPSPSSVMN). The segment at 152–189 (FQEEPSPSSVMNKDNEGPVSESVMAPEPAWGASVPSAI) is disordered.

Belongs to the SepF family. In terms of assembly, homodimer. Interacts with FtsZ.

Its subcellular location is the cytoplasm. Cell division protein that is part of the divisome complex and is recruited early to the Z-ring. Probably stimulates Z-ring formation, perhaps through the cross-linking of FtsZ protofilaments. Its function overlaps with FtsA. This Prochlorococcus marinus (strain SARG / CCMP1375 / SS120) protein is Cell division protein SepF.